A 162-amino-acid chain; its full sequence is UPF0114 protein Pput_0713 (162 aa).

Helical transmembrane passes span 15-35 (LLAP…LKFF), 53-73 (LILV…LVMV), 109-126 (VAAS…RVFM), and 136-156 (LMWY…MGYL).

The protein belongs to the UPF0114 family.

The protein resides in the cell membrane. The sequence is that of UPF0114 protein Pput_0713 from Pseudomonas putida (strain ATCC 700007 / DSM 6899 / JCM 31910 / BCRC 17059 / LMG 24140 / F1).